The sequence spans 364 residues: Pre-mRNA-splicing factor SLT11 (364 aa).

The interval 331–364 is disordered; that stretch reads KSTDNAKNDKKKTSKKVHKDRSKKSKPRANKLTI. The segment covering 339–364 has biased composition (basic residues); the sequence is DKKKTSKKVHKDRSKKSKPRANKLTI.

This sequence belongs to the SLT11 family. As to quaternary structure, belongs to the CWC complex (or CEF1-associated complex), a spliceosome subcomplex composed of the U2, U5 and U6 snRNAs and at least BUD13, BUD31, BRR2, CDC40, CEF1, CLF1, CUS1, CWC2, CWC15, CWC21, CWC22, CWC23, CWC24, CWC25, CWC27, ECM2, HSH155, IST3, ISY1, LEA1, MSL1, NTC20, PRP8, PRP9, PRP11, PRP19, PRP21, PRP22, PRP45, PRP46, SLU7, SMB1, SMD1, SMD2, SMD3, SMX2, SMX3, SNT309, SNU114, SPP2, SYF1, SYF2, RSE1 and YJU2. Interacts with SLU7.

It is found in the nucleus. Involved in pre-mRNA splicing. Facilitates the cooperative formation of U2/U6 helix II in association with stem II in the spliceosome. Binds to RNA. The chain is Pre-mRNA-splicing factor SLT11 (ECM2) from Saccharomyces cerevisiae (strain ATCC 204508 / S288c) (Baker's yeast).